The chain runs to 61 residues: Large ribosomal subunit protein eL24 (61 aa).

The Zn(2+) site is built by C7, C10, C33, and C37. Residues 7 to 37 (CTYCGRSIEPGTGLMYVKNDGSVLWFCSSKC) form a C4-type zinc finger.

It belongs to the eukaryotic ribosomal protein eL24 family. As to quaternary structure, part of the 50S ribosomal subunit. Forms a cluster with proteins L3 and L14. Zn(2+) is required as a cofactor.

Functionally, binds to the 23S rRNA. The sequence is that of Large ribosomal subunit protein eL24 from Hyperthermus butylicus (strain DSM 5456 / JCM 9403 / PLM1-5).